We begin with the raw amino-acid sequence, 629 residues long: MIKSLKFSHKILLAAALVVIATFSLFTLYNDSLQRASIREDLEDYLHEMGEITASNVQNWLSGRILLIENLAQTLARDHSPETTQALLEQPLLGSTFLFTYLGQTDGTYTARPTSDLPADYDPRRRPWYNAATSAGQTTLTEPYMEPAIHELVLTIASPARQGGQPFGVVGGDLSLQTVVKIINSLDFGGMGYAFLVSGDGKILVHPDKDQVMKSLSDVYPRNTPKIGSGFSEAELHGNTRILSFSPVKGLSGLDWYIGISVDKDKAYAMLTKLRTSAIVAALIAVVAIVLLLGMLIRVLMQPLTDMGRAMQDIAQGEGDLTKRLKVTSNDEFGALAISFNRFVERIHESIREVAGTARQLHDVAQLVVNASNSSMANSDEQSNRTNSVAAAINELGAAAQEIARNAADASHHASDANHQAEDGKQVVEQTIRAMNELSEKISASCANIEALNSRTVNIGQILEVIKGISEQTNLLALNAAIEAARAGEAGRGFAVVADEVRNLAHRAQESAQQIQKMIEELQIGAQEAVSTMTESQRYSLESVEIANRAGERLSSVTGRIAEIDGMNQSVATATEEQTAVVDSLNMDITEINTLNQEGVENLQATLRACGELETQAGRLRQLVDSFKI.

At 1–10 (MIKSLKFSHK) the chain is on the cytoplasmic side. A helical membrane pass occupies residues 11–31 (ILLAAALVVIATFSLFTLYND). Topologically, residues 32–276 (SLQRASIRED…AYAMLTKLRT (245 aa)) are periplasmic. The 224-residue stretch at 37–260 (SIREDLEDYL…LSGLDWYIGI (224 aa)) folds into the Cache domain. L-arginine is bound by residues Y109, S115, Y121, 126 to 128 (RPW), E146, and D173. L-glutamine-binding positions include S115, Y121, 126-128 (RPW), 144-146 (YME), and D173. Residues 277-297 (SAIVAALIAVVAIVLLLGMLI) form a helical membrane-spanning segment. The region spanning 298-352 (RVLMQPLTDMGRAMQDIAQGEGDLTKRLKVTSNDEFGALAISFNRFVERIHESIR) is the HAMP domain. Over 298–629 (RVLMQPLTDM…LRQLVDSFKI (332 aa)) the chain is Cytoplasmic. Residues 357 to 593 (TARQLHDVAQ…SLNMDITEIN (237 aa)) enclose the Methyl-accepting transducer domain. Residues 405–424 (RNAADASHHASDANHQAEDG) are disordered. Residues 410–424 (ASHHASDANHQAEDG) show a composition bias toward basic and acidic residues.

The protein belongs to the methyl-accepting chemotaxis (MCP) protein family. As to quaternary structure, monomer in the absence and presence of ligands.

It localises to the cell inner membrane. Functionally, chemotactic-signal transducers respond to changes in the concentration of attractants and repellents in the environment, transduce a signal from the outside to the inside of the cell, and facilitate sensory adaptation through the variation of the level of methylation. Responds to L-Arg, L-Gln, L-Ala, L-Glu, L-Lys, L-Met and L-Tyr. Also involved in repellent responses to trichloroethylene (TCE), chloroform and methylthiocyanate. This chain is Methyl-accepting chemotaxis protein PctB (pctB), found in Pseudomonas aeruginosa (strain ATCC 15692 / DSM 22644 / CIP 104116 / JCM 14847 / LMG 12228 / 1C / PRS 101 / PAO1).